A 204-amino-acid chain; its full sequence is Guanylate kinase (204 aa).

The region spanning 5-184 (GLLLVLSGPS…AVDHIKSIVE (180 aa)) is the Guanylate kinase-like domain. 12–19 (GPSGVGKG) provides a ligand contact to ATP.

The protein belongs to the guanylate kinase family.

It localises to the cytoplasm. The catalysed reaction is GMP + ATP = GDP + ADP. In terms of biological role, essential for recycling GMP and indirectly, cGMP. The sequence is that of Guanylate kinase from Lactobacillus johnsonii (strain CNCM I-12250 / La1 / NCC 533).